The chain runs to 55 residues: Large ribosomal subunit protein bL33 (55 aa).

This sequence belongs to the bacterial ribosomal protein bL33 family.

The sequence is that of Large ribosomal subunit protein bL33 from Bradyrhizobium sp. (strain BTAi1 / ATCC BAA-1182).